Reading from the N-terminus, the 191-residue chain is Calcium-activated potassium channel subunit beta-1 (191 aa).

The Cytoplasmic segment spans residues 1–15 (MGKKLVMAQKRGETR). The helical transmembrane segment at 16 to 36 (ALCLGVAMVMCAVITYYILGT) threads the bilayer. The Extracellular portion of the chain corresponds to 37-157 (TMLPLYQKSV…YQRLYGPQAL (121 aa)). 2 N-linked (GlcNAc...) asparagine glycosylation sites follow: N80 and N142. A helical transmembrane segment spans residues 158–178 (LASLFWPTFLLTGGLLIIAMV). Topologically, residues 179–191 (KINRSLSILAAQK) are cytoplasmic.

It belongs to the KCNMB (TC 8.A.14.1) family. KCNMB1 subfamily. Interacts with KCNMA1 tetramer. There are probably 4 molecules of KCMNB1 per KCNMA1 tetramer. N-glycosylated.

The protein localises to the membrane. Its function is as follows. Regulatory subunit of the calcium activated potassium KCNMA1 (maxiK) channel. Modulates the calcium sensitivity and gating kinetics of KCNMA1, thereby contributing to KCNMA1 channel diversity. Increases the apparent Ca(2+)/voltage sensitivity of the KCNMA1 channel. It also modifies KCNMA1 channel kinetics and alters its pharmacological properties. It slows down the activation and the deactivation kinetics of the channel. Acts as a negative regulator of smooth muscle contraction by enhancing the calcium sensitivity to KCNMA1. Its presence is also a requirement for internal binding of the KCNMA1 channel opener dehydrosoyasaponin I (DHS-1) triterpene glycoside and for external binding of the agonist hormone 17-beta-estradiol (E2). Increases the binding activity of charybdotoxin (CTX) toxin to KCNMA1 peptide blocker by increasing the CTX association rate and decreasing the dissociation rate. The sequence is that of Calcium-activated potassium channel subunit beta-1 (KCNMB1) from Oryctolagus cuniculus (Rabbit).